The following is a 240-amino-acid chain: Uridylate kinase (240 aa).

Position 14-17 (14-17) interacts with ATP; it reads KLSG. Glycine 56 provides a ligand contact to UMP. ATP is bound by residues glycine 57 and arginine 61. Residues aspartate 76 and 137–144 each bind UMP; that span reads TGNPFFTT. ATP contacts are provided by threonine 164, tyrosine 170, and aspartate 173.

The protein belongs to the UMP kinase family. In terms of assembly, homohexamer.

The protein resides in the cytoplasm. It carries out the reaction UMP + ATP = UDP + ADP. The protein operates within pyrimidine metabolism; CTP biosynthesis via de novo pathway; UDP from UMP (UMPK route): step 1/1. Its activity is regulated as follows. Inhibited by UTP. Catalyzes the reversible phosphorylation of UMP to UDP. In Verminephrobacter eiseniae (strain EF01-2), this protein is Uridylate kinase.